A 130-amino-acid chain; its full sequence is Small ribosomal subunit protein uS9 (130 aa).

The disordered stretch occupies residues 109-130; that stretch reads RMKERKKYGLKKARRAPQFSKR. The segment covering 111–130 has biased composition (basic residues); it reads KERKKYGLKKARRAPQFSKR.

The protein belongs to the universal ribosomal protein uS9 family.

This Clostridium kluyveri (strain NBRC 12016) protein is Small ribosomal subunit protein uS9.